The primary structure comprises 703 residues: Protein teflon (703 aa).

The C2H2-type 1 zinc finger occupies Met32–His55. Disordered stretches follow at residues Thr78 to Ser111, Ser138 to Pro161, and Ser339 to Glu434. Composition is skewed to polar residues over residues Gln84 to Asp94 and Ser138 to Pro147. Basic and acidic residues predominate over residues Pro148–Pro161. 2 stretches are compositionally biased toward polar residues: residues Ser339–Val352 and Ser364–Ile373. C2H2-type zinc fingers lie at residues Tyr649–His672 and Phe677–His700.

This sequence belongs to the Teflon family.

It is found in the nucleus. It localises to the chromosome. In terms of biological role, specifically required in males for proper segregation of autosomal bivalents at meiosis I. Expression is required in the male germ line prior to spermatocyte stage S4. May have a role as a bridging molecule maintaining adhesion to hold autosome bivalents together via heterochromatic connections. This Drosophila pseudoobscura pseudoobscura (Fruit fly) protein is Protein teflon.